Consider the following 475-residue polypeptide: Ankyrin repeat, SAM and basic leucine zipper domain-containing protein 1 (475 aa).

The segment at 1–24 is disordered; it reads MAAGPLRGLAVAGGGESSESEDDG. Phosphoserine occurs at positions 17, 18, and 20. ANK repeat units lie at residues 45–74, 78–107, 110–144, 148–177, 181–210, and 214–243; these read ERQE…SVDT, YGWT…NASF, DKQT…DPNV, RLMT…EVNT, NGYT…NKMI, and DGKT…PLEG. In terms of domain architecture, SAM spans 272–334; it reads SYTAFGDLEI…KIMAALKELE (63 aa).

In terms of assembly, interacts with DDX4, PIWIL1, RANBP9 and TDRD1.

The protein resides in the cytoplasm. Plays a central role during spermatogenesis by repressing transposable elements and preventing their mobilization, which is essential for the germline integrity. Acts via the piRNA metabolic process, which mediates the repression of transposable elements during meiosis by forming complexes composed of piRNAs and Piwi proteins and governs the methylation and subsequent repression of transposons. Its association with pi-bodies suggests a participation in the primary piRNAs metabolic process. Required prior to the pachytene stage to facilitate the production of multiple types of piRNAs, including those associated with repeats involved in the regulation of retrotransposons. May act by mediating protein-protein interactions during germ cell maturation. This is Ankyrin repeat, SAM and basic leucine zipper domain-containing protein 1 (ASZ1) from Ovis aries (Sheep).